A 543-amino-acid polypeptide reads, in one-letter code: Putative cysteine ligase BshC (543 aa).

Residues 419 to 440 (DEKNNDNIDEVVEEVKAQISDI) adopt a coiled-coil conformation.

The protein belongs to the BshC family.

Its function is as follows. Involved in bacillithiol (BSH) biosynthesis. May catalyze the last step of the pathway, the addition of cysteine to glucosamine malate (GlcN-Mal) to generate BSH. The sequence is that of Putative cysteine ligase BshC from Oceanobacillus iheyensis (strain DSM 14371 / CIP 107618 / JCM 11309 / KCTC 3954 / HTE831).